The primary structure comprises 230 residues: 2,3-bisphosphoglycerate-dependent phosphoglycerate mutase (230 aa).

Residues 10-17 (RHGQSKWN), 23-24 (TG), Arg-62, 89-92 (ERHY), Lys-100, 116-117 (RR), and 185-186 (GN) contribute to the substrate site. Residue His-11 is the Tele-phosphohistidine intermediate of the active site. Glu-89 serves as the catalytic Proton donor/acceptor.

The protein belongs to the phosphoglycerate mutase family. BPG-dependent PGAM subfamily. As to quaternary structure, homodimer.

It carries out the reaction (2R)-2-phosphoglycerate = (2R)-3-phosphoglycerate. It functions in the pathway carbohydrate degradation; glycolysis; pyruvate from D-glyceraldehyde 3-phosphate: step 3/5. Catalyzes the interconversion of 2-phosphoglycerate and 3-phosphoglycerate. This chain is 2,3-bisphosphoglycerate-dependent phosphoglycerate mutase, found in Buchnera aphidicola subsp. Schizaphis graminum (strain Sg).